Consider the following 214-residue polypeptide: Thiamine pyrophosphokinase (214 aa).

Belongs to the thiamine pyrophosphokinase family.

It catalyses the reaction thiamine + ATP = thiamine diphosphate + AMP + H(+). It participates in cofactor biosynthesis; thiamine diphosphate biosynthesis; thiamine diphosphate from thiamine: step 1/1. Its function is as follows. Catalyzes the ATP-dependent phosphorylation of thiamine to thiamine pyrophosphate. Is involved in thiamine salvage. The chain is Thiamine pyrophosphokinase from Bacillus subtilis (strain 168).